A 339-amino-acid polypeptide reads, in one-letter code: Glycerol-3-phosphate dehydrogenase [NAD(P)+] (339 aa).

NADPH contacts are provided by Ser11, Trp12, and Lys109. Residues Lys109, Gly140, and Ser142 each contribute to the sn-glycerol 3-phosphate site. Residue Ala144 participates in NADPH binding. Residues Lys195, Asp249, Ser259, Arg260, and Asn261 each coordinate sn-glycerol 3-phosphate. Lys195 acts as the Proton acceptor in catalysis. Arg260 serves as a coordination point for NADPH. Positions 284 and 286 each coordinate NADPH.

Belongs to the NAD-dependent glycerol-3-phosphate dehydrogenase family.

The protein localises to the cytoplasm. It carries out the reaction sn-glycerol 3-phosphate + NAD(+) = dihydroxyacetone phosphate + NADH + H(+). The catalysed reaction is sn-glycerol 3-phosphate + NADP(+) = dihydroxyacetone phosphate + NADPH + H(+). It functions in the pathway membrane lipid metabolism; glycerophospholipid metabolism. Functionally, catalyzes the reduction of the glycolytic intermediate dihydroxyacetone phosphate (DHAP) to sn-glycerol 3-phosphate (G3P), the key precursor for phospholipid synthesis. This Lactobacillus helveticus (strain DPC 4571) protein is Glycerol-3-phosphate dehydrogenase [NAD(P)+].